The primary structure comprises 241 residues: Putative ABC transporter ATP-binding protein CA_C0773 (241 aa).

An ABC transporter domain is found at 2-241 (IKLEKVSFTY…REFLMECNII (240 aa)). An ATP-binding site is contributed by 34-41 (GPNGSGKS).

This sequence belongs to the ABC transporter superfamily.

It is found in the cell membrane. Its function is as follows. Probably part of an ABC transporter complex. Responsible for energy coupling to the transport system. This Clostridium acetobutylicum (strain ATCC 824 / DSM 792 / JCM 1419 / IAM 19013 / LMG 5710 / NBRC 13948 / NRRL B-527 / VKM B-1787 / 2291 / W) protein is Putative ABC transporter ATP-binding protein CA_C0773.